A 90-amino-acid polypeptide reads, in one-letter code: Non-structural protein NS-S (90 aa).

The tract at residues 4 to 29 is nucleolar signal; it reads KLSLPGKNLKMQKRRWKPTRMMLTRA.

It belongs to the hantavirus NS-S protein family. As to quaternary structure, interacts with host MAVS; this interaction may reduce MAVS ubiquitination.

The protein localises to the host cytoplasm. It is found in the host perinuclear region. It localises to the host nucleus. In terms of biological role, antagonizes host type-I IFN signaling pathway. The sequence is that of Non-structural protein NS-S (N) from Homo sapiens (Human).